The chain runs to 149 residues: SsrA-binding protein (149 aa).

This sequence belongs to the SmpB family.

The protein localises to the cytoplasm. In terms of biological role, required for rescue of stalled ribosomes mediated by trans-translation. Binds to transfer-messenger RNA (tmRNA), required for stable association of tmRNA with ribosomes. tmRNA and SmpB together mimic tRNA shape, replacing the anticodon stem-loop with SmpB. tmRNA is encoded by the ssrA gene; the 2 termini fold to resemble tRNA(Ala) and it encodes a 'tag peptide', a short internal open reading frame. During trans-translation Ala-aminoacylated tmRNA acts like a tRNA, entering the A-site of stalled ribosomes, displacing the stalled mRNA. The ribosome then switches to translate the ORF on the tmRNA; the nascent peptide is terminated with the 'tag peptide' encoded by the tmRNA and targeted for degradation. The ribosome is freed to recommence translation, which seems to be the essential function of trans-translation. The sequence is that of SsrA-binding protein from Wolbachia pipientis subsp. Culex pipiens (strain wPip).